Here is a 408-residue protein sequence, read N- to C-terminus: Peptidase T (408 aa).

H79 serves as a coordination point for Zn(2+). D81 is an active-site residue. D139 lines the Zn(2+) pocket. E173 acts as the Proton acceptor in catalysis. Zn(2+)-binding residues include E174, D196, and H378.

Belongs to the peptidase M20B family. It depends on Zn(2+) as a cofactor.

Its subcellular location is the cytoplasm. The enzyme catalyses Release of the N-terminal residue from a tripeptide.. Cleaves the N-terminal amino acid of tripeptides. This Shouchella clausii (strain KSM-K16) (Alkalihalobacillus clausii) protein is Peptidase T.